Reading from the N-terminus, the 300-residue chain is MKIDLSRLVTESRNPASTEIDTLSTIEMLQVINEEDQKVALAVKAVLPQIAKTVNAITAAFANGGRLVYMGAGTSGRLGILDASECPPTYGTHPDMVIGLIAGGHQAILKAVENAEDDVKMGQDDLKALHLTKHDVVVGIAASGRTPYVLGGLEYAKSIGATTASIACNPECAMAKAADIAILPIVGAEVVTGSSRMKAGTAQKLVLNMLTTGAMIRSGKVFGNLMVDVEATNAKLIQRQTNIVVEATGASKEEAERALNACDRHCKTAILMILADLDAEQAKSRLAAHNGFIRAALNNN.

The 164-residue stretch at 57–220 folds into the SIS domain; it reads ITAAFANGGR…TTGAMIRSGK (164 aa). The active-site Proton donor is Glu85. Glu116 is a catalytic residue.

The protein belongs to the GCKR-like family. MurNAc-6-P etherase subfamily. As to quaternary structure, homodimer.

It catalyses the reaction N-acetyl-D-muramate 6-phosphate + H2O = N-acetyl-D-glucosamine 6-phosphate + (R)-lactate. It participates in amino-sugar metabolism; 1,6-anhydro-N-acetylmuramate degradation. The protein operates within amino-sugar metabolism; N-acetylmuramate degradation. Its pathway is cell wall biogenesis; peptidoglycan recycling. Its function is as follows. Specifically catalyzes the cleavage of the D-lactyl ether substituent of MurNAc 6-phosphate, producing GlcNAc 6-phosphate and D-lactate. Together with AnmK, is also required for the utilization of anhydro-N-acetylmuramic acid (anhMurNAc) either imported from the medium or derived from its own cell wall murein, and thus plays a role in cell wall recycling. This chain is N-acetylmuramic acid 6-phosphate etherase 2, found in Vibrio parahaemolyticus serotype O3:K6 (strain RIMD 2210633).